The primary structure comprises 373 residues: Probable peptidoglycan glycosyltransferase FtsW (373 aa).

A run of 9 helical transmembrane segments spans residues 15-35 (LVIL…VYSA), 48-68 (FYFL…MAVA), 80-100 (AVPI…PGIG), 144-164 (FFST…LILL), 168-188 (DLGA…AAGT), 192-212 (YIIA…MNVD), 278-298 (LGLI…LRGV), 311-331 (FLAF…MAVV), and 342-362 (LPFI…VGIL).

This sequence belongs to the SEDS family. FtsW subfamily.

The protein resides in the cell inner membrane. The catalysed reaction is [GlcNAc-(1-&gt;4)-Mur2Ac(oyl-L-Ala-gamma-D-Glu-L-Lys-D-Ala-D-Ala)](n)-di-trans,octa-cis-undecaprenyl diphosphate + beta-D-GlcNAc-(1-&gt;4)-Mur2Ac(oyl-L-Ala-gamma-D-Glu-L-Lys-D-Ala-D-Ala)-di-trans,octa-cis-undecaprenyl diphosphate = [GlcNAc-(1-&gt;4)-Mur2Ac(oyl-L-Ala-gamma-D-Glu-L-Lys-D-Ala-D-Ala)](n+1)-di-trans,octa-cis-undecaprenyl diphosphate + di-trans,octa-cis-undecaprenyl diphosphate + H(+). The protein operates within cell wall biogenesis; peptidoglycan biosynthesis. Its function is as follows. Peptidoglycan polymerase that is essential for cell division. In Geobacter sulfurreducens (strain DL-1 / KN400), this protein is Probable peptidoglycan glycosyltransferase FtsW.